A 252-amino-acid polypeptide reads, in one-letter code: Phosphoglycolate phosphatase (252 aa).

D13 functions as the Nucleophile in the catalytic mechanism. Mg(2+)-binding residues include D13, D15, and D192.

The protein belongs to the HAD-like hydrolase superfamily. CbbY/CbbZ/Gph/YieH family. Monomer. Requires Mg(2+) as cofactor. Chloride is required as a cofactor.

The enzyme catalyses 2-phosphoglycolate + H2O = glycolate + phosphate. It functions in the pathway organic acid metabolism; glycolate biosynthesis; glycolate from 2-phosphoglycolate: step 1/1. Functionally, specifically catalyzes the dephosphorylation of 2-phosphoglycolate. Is involved in the dissimilation of the intracellular 2-phosphoglycolate formed during the DNA repair of 3'-phosphoglycolate ends, a major class of DNA lesions induced by oxidative stress. The sequence is that of Phosphoglycolate phosphatase from Salmonella typhimurium (strain LT2 / SGSC1412 / ATCC 700720).